Here is a 451-residue protein sequence, read N- to C-terminus: Bacteriochlorophyllide d C-8(2)-methyltransferase (451 aa).

Residues 1–118 (MDDDSNQKPL…DDVANNRLKE (118 aa)) form the B12-binding domain. Residues 148 to 377 (VDGTKSIPIY…ALHLVIKSDR (230 aa)) enclose the Radical SAM core domain. Positions 162, 166, and 169 each coordinate [4Fe-4S] cluster.

This sequence belongs to the radical SAM superfamily. [4Fe-4S] cluster serves as cofactor.

The protein resides in the cytoplasm. It catalyses the reaction 8,12-diethyl-3-vinylbacteriochlorophyllide d + S-adenosyl-L-methionine = 12-ethyl-8-propyl-3-vinylbacteriochlorophyllide d + S-adenosyl-L-homocysteine + H(+). The catalysed reaction is 12-ethyl-8-propyl-3-vinylbacteriochlorophyllide d + S-adenosyl-L-methionine = 12-ethyl-8-isobutyl-3-vinylbacteriochlorophyllide d + S-adenosyl-L-homocysteine + H(+). It functions in the pathway porphyrin-containing compound metabolism; bacteriochlorophyll biosynthesis (light-independent). In terms of biological role, involved in the biosynthesis of the major light-harvesting pigment bacteriochlorophyll c (BChlc), which confers a significant competitive advantage to green sulfur bacteria living at limiting red and near-infrared light intensities. BchQ is a methyltransferase that adds two consecutive methyl groups to the ethyl carbon at the C-8(2) position of 8,12-diethyl-3-vinylbacteriochlorophyllide d to yield 12-ethyl-8-isobutyl-3-vinylbacteriochlorophyllide d. This Chlorobaculum tepidum (strain ATCC 49652 / DSM 12025 / NBRC 103806 / TLS) (Chlorobium tepidum) protein is Bacteriochlorophyllide d C-8(2)-methyltransferase.